A 382-amino-acid polypeptide reads, in one-letter code: uncharacterized protein (382 aa).

The next 12 helical transmembrane spans lie at 14 to 34, 45 to 65, 79 to 99, 102 to 122, 131 to 151, 157 to 177, 204 to 224, 235 to 255, 270 to 290, 291 to 311, 325 to 345, and 348 to 368; these read GLLL…LWLA, VVSS…GYVI, FIFA…SWLA, FVAG…LMCS, LLAA…LLVS, LMSV…PLLF, LGVN…GLMP, ASIG…QWPI, VQVF…AMAP, ALFI…AWAC, ALLL…AMLM, and FSDN…LLML.

Belongs to the major facilitator superfamily. YcaD (TC 2.A.1.26) family.

Its subcellular location is the cell inner membrane. This is an uncharacterized protein from Shigella flexneri serotype 5b (strain 8401).